We begin with the raw amino-acid sequence, 358 residues long: scyllo-inositol 2-dehydrogenase (NADP(+)) IolW (358 aa).

Belongs to the Gfo/Idh/MocA family.

The enzyme catalyses scyllo-inositol + NADP(+) = scyllo-inosose + NADPH + H(+). Catalyzes the reversible NADPH-dependent reduction of scyllo-inosose (SIS) to scyllo-inositol (SI). Cannot use NADH instead of NADPH. May be involved in reduction of not only SIS but also various oxidized compounds manifested upon stressful conditions. The protein is scyllo-inositol 2-dehydrogenase (NADP(+)) IolW of Bacillus subtilis (strain 168).